We begin with the raw amino-acid sequence, 197 residues long: Large ribosomal subunit protein mL58 (197 aa).

The N-terminal 20 residues, 1 to 20 (MLFTIKPSFLKPVGFIQTRN), are a transit peptide targeting the mitochondrion.

Belongs to the mitochondrion-specific ribosomal protein mL58 family. Component of the mitochondrial large ribosomal subunit (mt-LSU). Mature yeast 74S mitochondrial ribosomes consist of a small (37S) and a large (54S) subunit. The 37S small subunit contains a 15S ribosomal RNA (15S mt-rRNA) and at least 32 different proteins. The 54S large subunit contains a 21S rRNA (21S mt-rRNA) and at least 45 different proteins.

The protein resides in the mitochondrion. In terms of biological role, component of the mitochondrial ribosome (mitoribosome), a dedicated translation machinery responsible for the synthesis of mitochondrial genome-encoded proteins, including at least some of the essential transmembrane subunits of the mitochondrial respiratory chain. The mitoribosomes are attached to the mitochondrial inner membrane and translation products are cotranslationally integrated into the membrane. This is Large ribosomal subunit protein mL58 (mrpl20) from Schizosaccharomyces pombe (strain 972 / ATCC 24843) (Fission yeast).